We begin with the raw amino-acid sequence, 528 residues long: Glucose transporter 1E (528 aa).

Residues 1-22 are disordered; it reads MTERRDNVSHAPDAIEGPNDGA. Residues 1–43 are Cytoplasmic-facing; sequence MTERRDNVSHAPDAIEGPNDGAHAEETSPGFFSFENLGVAQVQ. The chain crosses the membrane as a helical span at residues 44–64; that stretch reads VVGGTLNGYVIGYVAVYLLLY. Residues 65-118 are Extracellular-facing; it reads LTATECKFTTEGACGGRKIYGCKWSGTTCKFENPKCSEGSDPSDSCKNEVAYTS. A helical transmembrane segment spans residues 119–139; sequence VYSGIFACAMIVGSMVGSIIA. At 140-151 the chain is on the cytoplasmic side; that stretch reads GKCITTFGLKKS. The helical transmembrane segment at 152–172 threads the bilayer; that stretch reads FIIVSITCTIACVVVQVAIEY. At 173-175 the chain is on the extracellular side; sequence NNY. Residues 176-196 traverse the membrane as a helical segment; it reads YALCTGRVLIGLGVGILCSVF. Residues 197 to 213 are Cytoplasmic-facing; it reads PMYVNENAHPKLCKMDG. Residues 214–234 traverse the membrane as a helical segment; the sequence is VLFQVFTTLGIMLAAMLGLIL. Residues 235-250 lie on the Extracellular side of the membrane; that stretch reads DKTGASKEEANMAGRL. The chain crosses the membrane as a helical span at residues 251–271; sequence HVFSAVPLGLSVAMFLVGMFL. The Cytoplasmic segment spans residues 272–301; the sequence is RESTATFAQDDDGKADGGMDPNEYGWGQML. Residues 302-322 traverse the membrane as a helical segment; the sequence is WPLFMGAVTAGTLQLTGINAV. Topologically, residues 323–338 are extracellular; the sequence is MNYAPKITENLGMDPS. Residues 339 to 359 form a helical membrane-spanning segment; it reads LGNFLVMAWNFVTSLVAIPLA. The Cytoplasmic segment spans residues 360 to 367; sequence SRFTMRQM. Residues 368-388 traverse the membrane as a helical segment; it reads FITCSFVASCMCLFLCGIPVF. At 389–403 the chain is on the extracellular side; the sequence is PGVAEEKVKNGVATT. The chain crosses the membrane as a helical span at residues 404–424; that stretch reads GIALFIAAFEFGVGSCFFVLA. Residues 425-438 lie on the Cytoplasmic side of the membrane; the sequence is QDLFPPSFRPKGSS. Residues 439–459 form a helical membrane-spanning segment; the sequence is FVVMMQFIFNILINLLYPITT. The Extracellular portion of the chain corresponds to 460–475; the sequence is EAISGGATGDQDKGQA. The helical transmembrane segment at 476–496 threads the bilayer; sequence VVFILFGLIGLICFVLQFFYL. The Cytoplasmic portion of the chain corresponds to 497–528; that stretch reads YPYDANQDHENDHGTEPVERILSPVDVPTPRN. A disordered region spans residues 507 to 528; that stretch reads NDHGTEPVERILSPVDVPTPRN.

Belongs to the major facilitator superfamily. Sugar transporter (TC 2.A.1.1) family.

The protein localises to the membrane. Its function is as follows. Facilitative glucose transporter. The polypeptide is Glucose transporter 1E (THT1E) (Trypanosoma brucei brucei).